A 279-amino-acid chain; its full sequence is Tryptophan synthase alpha chain (279 aa).

Catalysis depends on proton acceptor residues E63 and D74.

Belongs to the TrpA family. As to quaternary structure, tetramer of two alpha and two beta chains.

It carries out the reaction (1S,2R)-1-C-(indol-3-yl)glycerol 3-phosphate + L-serine = D-glyceraldehyde 3-phosphate + L-tryptophan + H2O. It participates in amino-acid biosynthesis; L-tryptophan biosynthesis; L-tryptophan from chorismate: step 5/5. The alpha subunit is responsible for the aldol cleavage of indoleglycerol phosphate to indole and glyceraldehyde 3-phosphate. The polypeptide is Tryptophan synthase alpha chain (Prochlorococcus marinus subsp. pastoris (strain CCMP1986 / NIES-2087 / MED4)).